Consider the following 469-residue polypeptide: MMFLTQLVSALFLFFLGPISYGKPVETFVLPLAQDAPIPPSEDPFYQPPPGYEETEPGTVLRQRRPPFPISLFRSAPIDLAATYQVLYRSSDTFGQPTATVSTILIPHNANMSKVLSYQVVEDAAFINCAPSYALQLHSDPGGLFGTIIIQSELLLITAALENGWVVTIPDYEGPAAAFLAYWRAGYATLDGIRATLASSGFTGVDPDAAVGLWGTSGGSVASAFAADLHPKYAPELNIVGAALGGVVPSITTALHSLNKGFDAGIIVSGVIGLSKEYTYMQPILESYLVPHLRDKFMSAGKKCSGAVSLDFRMEDIFSYFKGGEESGLFADPRVKAILDHNAMPQGVPEIPILILKSVNDEISPISDTDALVEKYCSNGVTIDYKRDLLSVHTILAVTGAPEAVLWLRDRLDGITVEKGCKTSTIFMTLLQPGALEVMSKTIIDNLLNLLGKPVGPRLRTEIVHVPPL.

Residues 1-22 (MMFLTQLVSALFLFFLGPISYG) form the signal peptide. A compositionally biased stretch (pro residues) spans 40–51 (PSEDPFYQPPPG). The interval 40 to 59 (PSEDPFYQPPPGYEETEPGT) is disordered. An N-linked (GlcNAc...) asparagine glycan is attached at N111. A disulfide bridge links C129 with C304. Active-site charge relay system residues include S217, D361, and H393. C377 and C421 are disulfide-bonded.

The protein belongs to the AB hydrolase superfamily. Lipase family. Class Lip subfamily. As to quaternary structure, monomer.

It localises to the secreted. It catalyses the reaction a triacylglycerol + H2O = a diacylglycerol + a fatty acid + H(+). Its function is as follows. Hydrolyzes triglycerides, with a preference for substrates with short-chain lengths (C4 to C8). This chain is Lipase A, found in Arthroderma benhamiae (strain ATCC MYA-4681 / CBS 112371) (Trichophyton mentagrophytes).